Here is a 245-residue protein sequence, read N- to C-terminus: Ribonuclease 3 (245 aa).

One can recognise an RNase III domain in the interval 17–146 (FTDKMKSLGL…FVGALYLDQG (130 aa)). Glu59 contributes to the Mg(2+) binding site. The active site involves Asp63. Mg(2+) is bound by residues Asp132 and Glu135. Glu135 is a catalytic residue. Positions 172 to 241 (DFKTQFQEYV…AEQAYKLMKN (70 aa)) constitute a DRBM domain.

It belongs to the ribonuclease III family. Homodimer. Mg(2+) is required as a cofactor.

It localises to the cytoplasm. It catalyses the reaction Endonucleolytic cleavage to 5'-phosphomonoester.. In terms of biological role, digests double-stranded RNA. Involved in the processing of primary rRNA transcript to yield the immediate precursors to the large and small rRNAs (23S and 16S). Processes some mRNAs, and tRNAs when they are encoded in the rRNA operon. Processes pre-crRNA and tracrRNA of type II CRISPR loci if present in the organism. This Staphylococcus epidermidis (strain ATCC 35984 / DSM 28319 / BCRC 17069 / CCUG 31568 / BM 3577 / RP62A) protein is Ribonuclease 3.